A 330-amino-acid polypeptide reads, in one-letter code: Aspartate--ammonia ligase (330 aa).

The protein belongs to the class-II aminoacyl-tRNA synthetase family. AsnA subfamily.

The protein localises to the cytoplasm. The catalysed reaction is L-aspartate + NH4(+) + ATP = L-asparagine + AMP + diphosphate + H(+). The protein operates within amino-acid biosynthesis; L-asparagine biosynthesis; L-asparagine from L-aspartate (ammonia route): step 1/1. In Streptococcus pyogenes serotype M5 (strain Manfredo), this protein is Aspartate--ammonia ligase.